The primary structure comprises 505 residues: L-arabinose isomerase (505 aa).

Glu308, Glu335, His352, and His453 together coordinate Mn(2+).

The protein belongs to the arabinose isomerase family. Mn(2+) serves as cofactor.

It catalyses the reaction beta-L-arabinopyranose = L-ribulose. Its pathway is carbohydrate degradation; L-arabinose degradation via L-ribulose; D-xylulose 5-phosphate from L-arabinose (bacterial route): step 1/3. Functionally, catalyzes the conversion of L-arabinose to L-ribulose. The sequence is that of L-arabinose isomerase from Bifidobacterium longum (strain DJO10A).